Here is a 279-residue protein sequence, read N- to C-terminus: Protein FAM151B (279 aa).

It belongs to the menorin family.

In terms of biological role, essential for survival of retinal photoreceptor cells. This Mus musculus (Mouse) protein is Protein FAM151B (Fam151b).